We begin with the raw amino-acid sequence, 370 residues long: MQQPWKAVALSDLPLREDLKLQHAYGAPQLDVPVCLNVNENPYPPSPALVERIATAVADAARAANRYPDRDFAALRSHLAAYLTHDTGVTVDASSVWAANGSNEVIQQILQAFGGPGRSALAFTPAYPMYDEYCRTTFTRLHTLPRTEDFALDLNQALDSIRAHQPGVVLLTSPNNPTGTALPIDDIRAILDAAPGVVVVDEAYAEFRRHGVPSAVTLLPAYPRLIVTRTLSKAFKFAGGRVGYCACAPAIVEALKLVRLPYHLSAFTQAAACAALVARDEMLSQVEAIKAERDSTVDWLRGLGLTVADSDANFVMFGEFADRHRIWSGLLRRGVLIRESGPPPYLRVSIGTGAEMAAFRAALLDVMALE.

N6-(pyridoxal phosphate)lysine is present on K233.

It belongs to the class-II pyridoxal-phosphate-dependent aminotransferase family. Histidinol-phosphate aminotransferase subfamily. In terms of assembly, homodimer. Pyridoxal 5'-phosphate is required as a cofactor.

The enzyme catalyses L-histidinol phosphate + 2-oxoglutarate = 3-(imidazol-4-yl)-2-oxopropyl phosphate + L-glutamate. It functions in the pathway amino-acid biosynthesis; L-histidine biosynthesis; L-histidine from 5-phospho-alpha-D-ribose 1-diphosphate: step 7/9. This is Histidinol-phosphate aminotransferase 3 from Burkholderia lata (strain ATCC 17760 / DSM 23089 / LMG 22485 / NCIMB 9086 / R18194 / 383).